A 134-amino-acid chain; its full sequence is Proline-rich protein 4 (134 aa).

Positions 1–16 (MLLVLLSVVLLALSSA) are cleaved as a signal peptide. Residues 28–134 (FTFTIPDVED…ARHPQEQPLW (107 aa)) are disordered. A compositionally biased stretch (pro residues) spans 47-59 (QRPPPEGLLPRPP). The segment covering 110–119 (VSLQEASSFF) has biased composition (polar residues). Residues 120 to 134 (QRDRPARHPQEQPLW) are compositionally biased toward basic and acidic residues.

Abundantly expressed in lacrimal gland where it is found in the acinar cells but not in the intralobular ducts. Also found in the submandibular gland, the parotid and sublingual glands.

The protein resides in the secreted. This Homo sapiens (Human) protein is Proline-rich protein 4 (PRR4).